Here is a 432-residue protein sequence, read N- to C-terminus: Argininosuccinate lyase (432 aa).

Belongs to the lyase 1 family. Argininosuccinate lyase subfamily.

The protein resides in the cytoplasm. It carries out the reaction 2-(N(omega)-L-arginino)succinate = fumarate + L-arginine. The protein operates within amino-acid biosynthesis; L-arginine biosynthesis; L-arginine from L-ornithine and carbamoyl phosphate: step 3/3. The chain is Argininosuccinate lyase from Xanthomonas euvesicatoria pv. vesicatoria (strain 85-10) (Xanthomonas campestris pv. vesicatoria).